Here is a 208-residue protein sequence, read N- to C-terminus: FMN-dependent NADH:quinone oxidoreductase (208 aa).

Residues His10, 17–19 (SRS), 104–107 (MWNL), 148–153 (SNGGFY), and Asp184 each bind FMN.

Belongs to the azoreductase type 1 family. In terms of assembly, homodimer. The cofactor is FMN.

It catalyses the reaction 2 a quinone + NADH + H(+) = 2 a 1,4-benzosemiquinone + NAD(+). It carries out the reaction N,N-dimethyl-1,4-phenylenediamine + anthranilate + 2 NAD(+) = 2-(4-dimethylaminophenyl)diazenylbenzoate + 2 NADH + 2 H(+). Its function is as follows. Quinone reductase that provides resistance to thiol-specific stress caused by electrophilic quinones. Functionally, also exhibits azoreductase activity. Catalyzes the reductive cleavage of the azo bond in aromatic azo compounds to the corresponding amines. Requires NADH, but not NADPH, as an electron donor for its activity. The enzyme can also reduce a wide range of sulfonated azo dyes. The substrate preference order is methyl Red &gt; Orange II &gt; Ponceau BS &gt; Ponceau S &gt; Orange G &gt; Amaranth. In Enterococcus faecalis (strain ATCC 700802 / V583), this protein is FMN-dependent NADH:quinone oxidoreductase.